A 219-amino-acid polypeptide reads, in one-letter code: Response regulator ArlR (219 aa).

Positions 3 to 116 constitute a Response regulatory domain; it reads NILIVEDEQN…ELLARIRAVL (114 aa). Position 52 is a 4-aspartylphosphate (D52). The segment at residues 122–219 is a DNA-binding region (ompR/PhoB-type); the sequence is KDVLDINGII…TVRGVGYVIR (98 aa).

Post-translationally, phosphorylated by ArlS.

Its subcellular location is the cytoplasm. Functionally, member of the two-component regulatory system ArlS/ArlR. The protein is Response regulator ArlR (arlR) of Staphylococcus epidermidis (strain ATCC 35984 / DSM 28319 / BCRC 17069 / CCUG 31568 / BM 3577 / RP62A).